Consider the following 115-residue polypeptide: Phosphoribosyl-AMP cyclohydrolase (115 aa).

Residue aspartate 80 participates in Mg(2+) binding. Cysteine 81 is a Zn(2+) binding site. Aspartate 82 and aspartate 84 together coordinate Mg(2+). Residues cysteine 97 and cysteine 104 each contribute to the Zn(2+) site.

This sequence belongs to the PRA-CH family. In terms of assembly, homodimer. The cofactor is Mg(2+). Zn(2+) is required as a cofactor.

It is found in the cytoplasm. It carries out the reaction 1-(5-phospho-beta-D-ribosyl)-5'-AMP + H2O = 1-(5-phospho-beta-D-ribosyl)-5-[(5-phospho-beta-D-ribosylamino)methylideneamino]imidazole-4-carboxamide. It participates in amino-acid biosynthesis; L-histidine biosynthesis; L-histidine from 5-phospho-alpha-D-ribose 1-diphosphate: step 3/9. Catalyzes the hydrolysis of the adenine ring of phosphoribosyl-AMP. This chain is Phosphoribosyl-AMP cyclohydrolase, found in Rhodococcus erythropolis (strain PR4 / NBRC 100887).